Here is a 131-residue protein sequence, read N- to C-terminus: Structural protein ORF131 (131 aa).

This sequence belongs to the viral ORF131/RIP family.

The protein resides in the virion. This is Structural protein ORF131 from Acidianus convivator (ATV).